The primary structure comprises 163 residues: NADH-quinone oxidoreductase subunit I (163 aa).

2 consecutive 4Fe-4S ferredoxin-type domains span residues 54-84 (LRRYPNGEERCIACKLCEAVCPAMAITIESE) and 94-123 (TRYDIDLTKCIFCGFCEESCPVDSIVETRI). Residues cysteine 64, cysteine 67, cysteine 70, cysteine 74, cysteine 103, cysteine 106, cysteine 109, and cysteine 113 each coordinate [4Fe-4S] cluster.

This sequence belongs to the complex I 23 kDa subunit family. In terms of assembly, NDH-1 is composed of 14 different subunits. Subunits NuoA, H, J, K, L, M, N constitute the membrane sector of the complex. The cofactor is [4Fe-4S] cluster.

It localises to the cell inner membrane. The catalysed reaction is a quinone + NADH + 5 H(+)(in) = a quinol + NAD(+) + 4 H(+)(out). Its function is as follows. NDH-1 shuttles electrons from NADH, via FMN and iron-sulfur (Fe-S) centers, to quinones in the respiratory chain. The immediate electron acceptor for the enzyme in this species is believed to be ubiquinone. Couples the redox reaction to proton translocation (for every two electrons transferred, four hydrogen ions are translocated across the cytoplasmic membrane), and thus conserves the redox energy in a proton gradient. This chain is NADH-quinone oxidoreductase subunit I, found in Methylobacillus flagellatus (strain ATCC 51484 / DSM 6875 / VKM B-1610 / KT).